A 169-amino-acid polypeptide reads, in one-letter code: Small ribosomal subunit protein uS5 (169 aa).

The S5 DRBM domain maps to leucine 13 to valine 76.

This sequence belongs to the universal ribosomal protein uS5 family. In terms of assembly, part of the 30S ribosomal subunit. Contacts proteins S4 and S8.

With S4 and S12 plays an important role in translational accuracy. In terms of biological role, located at the back of the 30S subunit body where it stabilizes the conformation of the head with respect to the body. The sequence is that of Small ribosomal subunit protein uS5 from Hydrogenovibrio crunogenus (strain DSM 25203 / XCL-2) (Thiomicrospira crunogena).